Consider the following 281-residue polypeptide: Putative pyruvate, phosphate dikinase regulatory protein (281 aa).

153 to 160 is an ADP binding site; it reads GISRTSKT.

It belongs to the pyruvate, phosphate/water dikinase regulatory protein family. PDRP subfamily.

It catalyses the reaction N(tele)-phospho-L-histidyl/L-threonyl-[pyruvate, phosphate dikinase] + ADP = N(tele)-phospho-L-histidyl/O-phospho-L-threonyl-[pyruvate, phosphate dikinase] + AMP + H(+). The enzyme catalyses N(tele)-phospho-L-histidyl/O-phospho-L-threonyl-[pyruvate, phosphate dikinase] + phosphate + H(+) = N(tele)-phospho-L-histidyl/L-threonyl-[pyruvate, phosphate dikinase] + diphosphate. Its function is as follows. Bifunctional serine/threonine kinase and phosphorylase involved in the regulation of the pyruvate, phosphate dikinase (PPDK) by catalyzing its phosphorylation/dephosphorylation. The chain is Putative pyruvate, phosphate dikinase regulatory protein from Bdellovibrio bacteriovorus (strain ATCC 15356 / DSM 50701 / NCIMB 9529 / HD100).